The primary structure comprises 100 residues: Small ribosomal subunit protein uS14c (100 aa).

It belongs to the universal ribosomal protein uS14 family. As to quaternary structure, part of the 30S ribosomal subunit.

The protein resides in the plastid. It is found in the chloroplast. In terms of biological role, binds 16S rRNA, required for the assembly of 30S particles. In Chara vulgaris (Common stonewort), this protein is Small ribosomal subunit protein uS14c.